A 356-amino-acid chain; its full sequence is Chorismate synthase (356 aa).

Positions 48 and 54 each coordinate NADP(+). FMN is bound by residues 125 to 127, 237 to 238, Gly-282, 297 to 301, and Arg-323; these read RSS, NA, and KPTSS.

This sequence belongs to the chorismate synthase family. As to quaternary structure, homotetramer. It depends on FMNH2 as a cofactor.

The enzyme catalyses 5-O-(1-carboxyvinyl)-3-phosphoshikimate = chorismate + phosphate. It participates in metabolic intermediate biosynthesis; chorismate biosynthesis; chorismate from D-erythrose 4-phosphate and phosphoenolpyruvate: step 7/7. Functionally, catalyzes the anti-1,4-elimination of the C-3 phosphate and the C-6 proR hydrogen from 5-enolpyruvylshikimate-3-phosphate (EPSP) to yield chorismate, which is the branch point compound that serves as the starting substrate for the three terminal pathways of aromatic amino acid biosynthesis. This reaction introduces a second double bond into the aromatic ring system. This Rhizorhabdus wittichii (strain DSM 6014 / CCUG 31198 / JCM 15750 / NBRC 105917 / EY 4224 / RW1) (Sphingomonas wittichii) protein is Chorismate synthase.